The chain runs to 204 residues: Thiamine-phosphate synthase (204 aa).

Residues 32-36 and aspartate 64 contribute to the 4-amino-2-methyl-5-(diphosphooxymethyl)pyrimidine site; that span reads QLRMK. The Mg(2+) site is built by aspartate 65 and aspartate 84. Position 103 (threonine 103) interacts with 4-amino-2-methyl-5-(diphosphooxymethyl)pyrimidine. 2-[(2R,5Z)-2-carboxy-4-methylthiazol-5(2H)-ylidene]ethyl phosphate is bound at residue 129-131; that stretch reads TTT. Position 132 (lysine 132) interacts with 4-amino-2-methyl-5-(diphosphooxymethyl)pyrimidine. Glycine 165 provides a ligand contact to 2-[(2R,5Z)-2-carboxy-4-methylthiazol-5(2H)-ylidene]ethyl phosphate.

The protein belongs to the thiamine-phosphate synthase family. Mg(2+) serves as cofactor.

The enzyme catalyses 2-[(2R,5Z)-2-carboxy-4-methylthiazol-5(2H)-ylidene]ethyl phosphate + 4-amino-2-methyl-5-(diphosphooxymethyl)pyrimidine + 2 H(+) = thiamine phosphate + CO2 + diphosphate. It carries out the reaction 2-(2-carboxy-4-methylthiazol-5-yl)ethyl phosphate + 4-amino-2-methyl-5-(diphosphooxymethyl)pyrimidine + 2 H(+) = thiamine phosphate + CO2 + diphosphate. The catalysed reaction is 4-methyl-5-(2-phosphooxyethyl)-thiazole + 4-amino-2-methyl-5-(diphosphooxymethyl)pyrimidine + H(+) = thiamine phosphate + diphosphate. The protein operates within cofactor biosynthesis; thiamine diphosphate biosynthesis; thiamine phosphate from 4-amino-2-methyl-5-diphosphomethylpyrimidine and 4-methyl-5-(2-phosphoethyl)-thiazole: step 1/1. Its function is as follows. Condenses 4-methyl-5-(beta-hydroxyethyl)thiazole monophosphate (THZ-P) and 2-methyl-4-amino-5-hydroxymethyl pyrimidine pyrophosphate (HMP-PP) to form thiamine monophosphate (TMP). This chain is Thiamine-phosphate synthase, found in Bacteroides fragilis (strain YCH46).